The sequence spans 228 residues: 5'-methylthioadenosine/S-adenosylhomocysteine nucleosidase (228 aa).

Catalysis depends on Glu-11, which acts as the Proton acceptor. Substrate-binding positions include Gly-77, Ile-151, and Met-172–Glu-173. The Proton donor role is filled by Asp-196.

Belongs to the PNP/UDP phosphorylase family. MtnN subfamily.

It carries out the reaction S-adenosyl-L-homocysteine + H2O = S-(5-deoxy-D-ribos-5-yl)-L-homocysteine + adenine. The enzyme catalyses S-methyl-5'-thioadenosine + H2O = 5-(methylsulfanyl)-D-ribose + adenine. The catalysed reaction is 5'-deoxyadenosine + H2O = 5-deoxy-D-ribose + adenine. The protein operates within amino-acid biosynthesis; L-methionine biosynthesis via salvage pathway; S-methyl-5-thio-alpha-D-ribose 1-phosphate from S-methyl-5'-thioadenosine (hydrolase route): step 1/2. In terms of biological role, catalyzes the irreversible cleavage of the glycosidic bond in both 5'-methylthioadenosine (MTA) and S-adenosylhomocysteine (SAH/AdoHcy) to adenine and the corresponding thioribose, 5'-methylthioribose and S-ribosylhomocysteine, respectively. Also cleaves 5'-deoxyadenosine, a toxic by-product of radical S-adenosylmethionine (SAM) enzymes, into 5-deoxyribose and adenine. The protein is 5'-methylthioadenosine/S-adenosylhomocysteine nucleosidase of Staphylococcus aureus (strain JH1).